Reading from the N-terminus, the 300-residue chain is B1 kinase (300 aa).

A Protein kinase domain is found at 16–282; that stretch reads WVVGPLIGKG…ITMVNSLTYF (267 aa). ATP-binding positions include 22–30 and Lys45; that span reads IGKGGFGSI. The active-site Proton acceptor is Asp147.

Belongs to the protein kinase superfamily. Ser/Thr protein kinase family. Poxviruses subfamily. As to quaternary structure, interacts with host JIP1; this interaction increases the amount of MAPK bound to JIP1 and subsequently increases the activity of transcription factors, such as JUN, that respond to these complexes. Interacts with protein OPG198; this interaction inhibits the repressive activity of OPG198 pseudokinase on viral replication factory formation. The cofactor is Mg(2+). In terms of processing, autophosphorylated.

It localises to the virion. The protein localises to the host cytoplasm. The catalysed reaction is L-seryl-[protein] + ATP = O-phospho-L-seryl-[protein] + ADP + H(+). It catalyses the reaction L-threonyl-[protein] + ATP = O-phospho-L-threonyl-[protein] + ADP + H(+). Its function is as follows. Essential serine/threonine-protein kinase that plays different role in the viral life cycle. Phosphorylates the host small ribosomal protein RACK1 thereby customizing the ribosomes to a state optimal for viral mRNAs (which contain poly-A leaders) but not for host mRNAs. Facilitates viral DNA replication by inhibiting host BANF1, a cellular host defense responsive to foreign DNA. Phosphorylates host BANF1 on serine and threonine residues; this leads to BANF1 relocalization to the cytoplasm, loss of dimerization and impaired DNA binding activity. Indeed, BANF1 activity depends on its DNA-binding property which is blocked by VPK1-mediated phosphorylation. Required for viral intermediate genes expression, probably by inhibiting host BANF1. Modulates cellular responses via host JUN by two different mechanisms, either by direct phosphorylation or by modulation of upstream JIP1-MAPK complexes. Seems to participate in the accumulation/processing of late proteins and thus in virion maturation. In addition, inhibits B12 repressive activity on viral DNA replication via a phosphorylation-dependent mechanism. The polypeptide is B1 kinase (OPG187) (Vaccinia virus (strain Ankara) (VACV)).